Consider the following 296-residue polypeptide: Phosphatidylglycerol--prolipoprotein diacylglyceryl transferase (296 aa).

3 helical membrane passes run 17–37 (LAVR…IVVG), 59–79 (MMFY…VLFY), and 97–117 (GGMS…LFAW). Residue Arg142 participates in a 1,2-diacyl-sn-glycero-3-phospho-(1'-sn-glycerol) binding. 2 consecutive transmembrane segments (helical) span residues 230–250 (MGAI…TVEF) and 265–285 (LSMG…MMIW).

The protein belongs to the Lgt family.

The protein localises to the cell inner membrane. It carries out the reaction L-cysteinyl-[prolipoprotein] + a 1,2-diacyl-sn-glycero-3-phospho-(1'-sn-glycerol) = an S-1,2-diacyl-sn-glyceryl-L-cysteinyl-[prolipoprotein] + sn-glycerol 1-phosphate + H(+). It participates in protein modification; lipoprotein biosynthesis (diacylglyceryl transfer). Functionally, catalyzes the transfer of the diacylglyceryl group from phosphatidylglycerol to the sulfhydryl group of the N-terminal cysteine of a prolipoprotein, the first step in the formation of mature lipoproteins. The polypeptide is Phosphatidylglycerol--prolipoprotein diacylglyceryl transferase (Burkholderia thailandensis (strain ATCC 700388 / DSM 13276 / CCUG 48851 / CIP 106301 / E264)).